The chain runs to 196 residues: NADH-quinone oxidoreductase subunit I (196 aa).

4Fe-4S ferredoxin-type domains follow at residues 54–84 (LNRW…VEGA) and 104–133 (RVYQ…MTNE). [4Fe-4S] cluster contacts are provided by Cys64, Cys67, Cys70, Cys74, Cys113, Cys116, Cys119, and Cys123.

It belongs to the complex I 23 kDa subunit family. NDH-1 is composed of 14 different subunits. Subunits NuoA, H, J, K, L, M, N constitute the membrane sector of the complex. It depends on [4Fe-4S] cluster as a cofactor.

The protein localises to the cell membrane. It carries out the reaction a quinone + NADH + 5 H(+)(in) = a quinol + NAD(+) + 4 H(+)(out). In terms of biological role, NDH-1 shuttles electrons from NADH, via FMN and iron-sulfur (Fe-S) centers, to quinones in the respiratory chain. The immediate electron acceptor for the enzyme in this species is believed to be ubiquinone. Couples the redox reaction to proton translocation (for every two electrons transferred, four hydrogen ions are translocated across the cytoplasmic membrane), and thus conserves the redox energy in a proton gradient. The chain is NADH-quinone oxidoreductase subunit I from Nocardioides sp. (strain ATCC BAA-499 / JS614).